Consider the following 651-residue polypeptide: Translation factor GUF1 homolog, mitochondrial (651 aa).

Residues Met-1 to Phe-26 constitute a mitochondrion transit peptide. Positions Lys-51 to Lys-228 constitute a tr-type G domain. Residues Ala-60–Ser-67, Asp-121–His-125, and Asn-175–Asp-178 contribute to the GTP site.

This sequence belongs to the TRAFAC class translation factor GTPase superfamily. Classic translation factor GTPase family. LepA subfamily.

Its subcellular location is the mitochondrion inner membrane. The catalysed reaction is GTP + H2O = GDP + phosphate + H(+). In terms of biological role, promotes mitochondrial protein synthesis. May act as a fidelity factor of the translation reaction, by catalyzing a one-codon backward translocation of tRNAs on improperly translocated ribosomes. Binds to mitochondrial ribosomes in a GTP-dependent manner. The sequence is that of Translation factor GUF1 homolog, mitochondrial from Brugia malayi (Filarial nematode worm).